The following is a 376-amino-acid chain: 3-dehydroquinate synthase (376 aa).

NAD(+) is bound by residues 115–119 (GVIGD), 139–140 (TS), lysine 152, and lysine 161. Zn(2+) is bound by residues glutamate 194, histidine 256, and histidine 275.

This sequence belongs to the sugar phosphate cyclases superfamily. Dehydroquinate synthase family. It depends on Co(2+) as a cofactor. Zn(2+) serves as cofactor. NAD(+) is required as a cofactor.

The protein localises to the cytoplasm. It carries out the reaction 7-phospho-2-dehydro-3-deoxy-D-arabino-heptonate = 3-dehydroquinate + phosphate. The protein operates within metabolic intermediate biosynthesis; chorismate biosynthesis; chorismate from D-erythrose 4-phosphate and phosphoenolpyruvate: step 2/7. Functionally, catalyzes the conversion of 3-deoxy-D-arabino-heptulosonate 7-phosphate (DAHP) to dehydroquinate (DHQ). This Rhizobium leguminosarum bv. trifolii (strain WSM2304) protein is 3-dehydroquinate synthase.